The sequence spans 40 residues: Photosystem II reaction center protein J (40 aa).

Residues 10–30 (LWLVGTVAGTLVIGLLGVFFY) form a helical membrane-spanning segment.

Belongs to the PsbJ family. As to quaternary structure, PSII is composed of 1 copy each of membrane proteins PsbA, PsbB, PsbC, PsbD, PsbE, PsbF, PsbH, PsbI, PsbJ, PsbK, PsbL, PsbM, PsbT, PsbX, PsbY, PsbZ, Psb30/Ycf12, at least 3 peripheral proteins of the oxygen-evolving complex and a large number of cofactors. It forms dimeric complexes.

The protein localises to the plastid. It localises to the chloroplast thylakoid membrane. One of the components of the core complex of photosystem II (PSII). PSII is a light-driven water:plastoquinone oxidoreductase that uses light energy to abstract electrons from H(2)O, generating O(2) and a proton gradient subsequently used for ATP formation. It consists of a core antenna complex that captures photons, and an electron transfer chain that converts photonic excitation into a charge separation. This chain is Photosystem II reaction center protein J, found in Adiantum capillus-veneris (Maidenhair fern).